The primary structure comprises 415 residues: Mechanosensing system component YbdG (415 aa).

The Periplasmic segment spans residues 1 to 24; the sequence is MQDLISQVEDLAGIEIDHTTSMVM. The chain crosses the membrane as a helical span at residues 25-45; the sequence is IFGIIFLTAVVVHIILHWVVL. Residues 46-67 are Cytoplasmic-facing; that stretch reads RTFEKRAIASSRLWLQIITQNK. Residues 68–88 traverse the membrane as a helical segment; the sequence is LFHRLAFTLQGIIVNIQAVFW. At 89–104 the chain is on the periplasmic side; sequence LQKGTEAADILTTCAQ. The chain crosses the membrane as a helical span at residues 105–125; it reads LWIMMYALLSVFSLLDVILNL. Over 126–148 the chain is Cytoplasmic; the sequence is AQKFPAASQLPLKGIFQGIKLIG. Residues 149 to 169 traverse the membrane as a helical segment; it reads AILVGILMISLLIGQSPAILI. The Periplasmic portion of the chain corresponds to 170-173; it reads SGLG. Residues 174–194 form a helical membrane-spanning segment; that stretch reads AMAAVLMLVFKDPILGLVAGI. At 195–415 the chain is on the cytoplasmic side; sequence QLSANDMLKL…IRSLAGAFKQ (221 aa).

Belongs to the MscS (TC 1.A.23) family. As to quaternary structure, homoheptamer.

It is found in the cell inner membrane. In terms of biological role, functions as a component of a mechanosensing system that transmits signals triggered by external osmotic changes to intracellular factors. The chain is Mechanosensing system component YbdG (ybdG) from Shigella flexneri.